We begin with the raw amino-acid sequence, 294 residues long: Peroxidase-like protein 3 (294 aa).

A glycan (N-linked (GlcNAc...) asparagine) is linked at Asn129.

The protein belongs to the peroxidase family. In terms of tissue distribution, component of the acid-insoluble and acid-soluble organic matrix of calcified layers of the shell (at protein level).

Its subcellular location is the secreted. The protein is Peroxidase-like protein 3 of Lottia gigantea (Giant owl limpet).